Consider the following 264-residue polypeptide: MEAFWESRAGHWAGGPAPGQFYRIPATPSGLMDPASAPCEGPITRTQNPMVTGTSVLGVKFDGGVVIAADMLGSYGSLARFRNISRIMRVNDSTMLGASGDYADFQYLKQVLGQMVIDEELLGDGHSYSPRAIHSWLTRAMYSRRSKMNPLWNTMVIGGYADGESFLGYVDMLGVAYEAPSLATGYGAYLAQPLLREVLEKQPVLSQTEARELVERCMRVLYYRDARSYNRFQIATVTEKGVEIEGPLSAQTNWDIAHMISGFE.

Met-1 is subject to N-acetylmethionine. The propeptide occupies 1 to 45 (MEAFWESRAGHWAGGPAPGQFYRIPATPSGLMDPASAPCEGPITR). Position 102 is a phosphotyrosine (Tyr-102).

The protein belongs to the peptidase T1B family. In terms of assembly, the 26S proteasome consists of a 20S proteasome core and two 19S regulatory subunits. The 20S proteasome core is a barrel-shaped complex made of 28 subunits that are arranged in four stacked rings. The two outer rings are each formed by seven alpha subunits, and the two inner rings are formed by seven beta subunits. The proteolytic activity is exerted by three beta-subunits PSMB5, PSMB6 and PSMB7. Forms a ternary complex with SMAD1 and OAZ1 before PSMB4 is incorporated into the 20S proteasome. Interacts with PRPF19. As to expression, detected in liver (at protein level).

The protein localises to the cytoplasm. It localises to the nucleus. Functionally, non-catalytic component of the 20S core proteasome complex involved in the proteolytic degradation of most intracellular proteins. This complex plays numerous essential roles within the cell by associating with different regulatory particles. Associated with two 19S regulatory particles, forms the 26S proteasome and thus participates in the ATP-dependent degradation of ubiquitinated proteins. The 26S proteasome plays a key role in the maintenance of protein homeostasis by removing misfolded or damaged proteins that could impair cellular functions, and by removing proteins whose functions are no longer required. Associated with the PA200 or PA28, the 20S proteasome mediates ubiquitin-independent protein degradation. This type of proteolysis is required in several pathways including spermatogenesis (20S-PA200 complex) or generation of a subset of MHC class I-presented antigenic peptides (20S-PA28 complex). SMAD1/OAZ1/PSMB4 complex mediates the degradation of the CREBBP/EP300 repressor SNIP1. This is Proteasome subunit beta type-4 (Psmb4) from Mus musculus (Mouse).